The following is a 382-amino-acid chain: Zinc metalloproteinase nas-7 (382 aa).

An N-terminal signal peptide occupies residues Met1 to Gly18. Positions His19–Arg79 are excised as a propeptide. Residues Asn80–Pro273 form the Peptidase M12A domain. Intrachain disulfides connect Cys122–Cys272, Cys144–Cys163, Cys348–Cys382, Cys355–Cys375, and Cys362–Cys379. His171 is a binding site for Zn(2+). Glu172 is a catalytic residue. Zn(2+) is bound by residues His175 and His181. A ShKT domain is found at Cys348–Cys382.

It depends on Zn(2+) as a cofactor. As to expression, expressed in the head of adult hermaphrodites but not within pharynx cells. Expressed in pharyngeal muscles, mc cells, intestine, hypodermal seam cells, arcade cells, spermatheca, vulva and rectal epithelial cells.

Its subcellular location is the secreted. Its function is as follows. Metalloprotease. This Caenorhabditis elegans protein is Zinc metalloproteinase nas-7 (nas-7).